The following is a 462-amino-acid chain: MTQKTRTRFAPSPTGFIHLGNIRSALYPWAFARSTGGDFILRIEDTDLDRSTQAAVDVIIESMSWLGLDYDEGPFYQMQRMDRYKTVLAELQAAGHVYPCYMSVAELDALRDAQMAAKEKPRYDGTWRPAPGKTLPPIPEGVKPVLRFKNPLGGSVVWDDKVKGRIEISNDELDDLVIARPDGTPTYNFCVVVDDLDMAITHVIRGDDHVNNTPRQINIFKALGQEPPVYAHLPTVLNEQGEKMSKRNGAKPVTQYRDEGYLPDAMVNYLARLGWSHGDDEIFSRAQFLQWFNLDHLGRSAAQFDEAKLRWVNAQHLKIMSDDALAPLVQAQLQKRGIQADERLPRICALFKDRCDTTVVLADWAAAFYADITLNPAEVSQHVTDAIKPALNLLSEKLASCSWDKLSIAAAIKEVLVACAIKMPLLAMPVRVLVMGSAHTPSLDAVLELCEREKVLTRLRSE.

A 'HIGH' region motif is present at residues 11-21; the sequence is PSPTGFIHLGN. The short motif at 243-247 is the 'KMSKS' region element; the sequence is KMSKR. ATP is bound at residue Lys-246.

Belongs to the class-I aminoacyl-tRNA synthetase family. Glutamate--tRNA ligase type 1 subfamily. As to quaternary structure, monomer.

It localises to the cytoplasm. It carries out the reaction tRNA(Glu) + L-glutamate + ATP = L-glutamyl-tRNA(Glu) + AMP + diphosphate. Functionally, catalyzes the attachment of glutamate to tRNA(Glu) in a two-step reaction: glutamate is first activated by ATP to form Glu-AMP and then transferred to the acceptor end of tRNA(Glu). This is Glutamate--tRNA ligase from Albidiferax ferrireducens (strain ATCC BAA-621 / DSM 15236 / T118) (Rhodoferax ferrireducens).